Consider the following 54-residue polypeptide: Large ribosomal subunit protein bL33 (54 aa).

The protein belongs to the bacterial ribosomal protein bL33 family.

This chain is Large ribosomal subunit protein bL33, found in Chloroflexus aurantiacus (strain ATCC 29366 / DSM 635 / J-10-fl).